We begin with the raw amino-acid sequence, 174 residues long: Guided entry of tail-anchored proteins factor 1 (174 aa).

The Lumenal portion of the chain corresponds to 1 to 8; that stretch reads MSASETDR. Residues 9 to 29 traverse the membrane as a helical segment; that stretch reads WAWLLVLSFVFGCNLLRILLP. Residues 30-99 lie on the Cytoplasmic side of the membrane; that stretch reads SLSSFISRVL…VKARTAQLAK (70 aa). A coiled-coil region spans residues 39–94; that stretch reads LQKDAEQESQMRAEIQGMKQELSTVNMMDEFARYARLERKINKMTDKLKTHVKART. The segment at 39-97 is interaction with GET3/TRC40; it reads LQKDAEQESQMRAEIQGMKQELSTVNMMDEFARYARLERKINKMTDKLKTHVKARTAQL. The chain crosses the membrane as a helical span at residues 100–120; the sequence is IKWFISVAFYILQAALMISLI. Residues 121-148 lie on the Lumenal side of the membrane; sequence WKYYSVPVAVVPSKWITPLDRLVAFPTR. The helical transmembrane segment at 149–169 threads the bilayer; it reads VAGGIGITCWILVCNKVVAIV. Residues 170 to 174 are Cytoplasmic-facing; sequence LHPFS.

This sequence belongs to the WRB/GET1 family. As to quaternary structure, component of the Golgi to ER traffic (GET) complex, which is composed of GET1, CAMLG/GET2 and GET3. Within the complex, GET1 and CAMLG form a heterotetramer which is stabilized by phosphatidylinositol binding and which binds to the GET3 homodimer. Interacts with CAMLG/GET2 (via C-terminus). GET3 shows a higher affinity for CAMLG than for GET1.

It localises to the endoplasmic reticulum membrane. Required for the post-translational delivery of tail-anchored (TA) proteins to the endoplasmic reticulum. Together with CAMLG/GET2, acts as a membrane receptor for soluble GET3/TRC40, which recognizes and selectively binds the transmembrane domain of TA proteins in the cytosol. Required to ensure correct topology and ER insertion of CAMLG. In Mus musculus (Mouse), this protein is Guided entry of tail-anchored proteins factor 1.